The primary structure comprises 397 residues: Inositol 3-kinase (397 aa).

ATP is bound by residues Ser228, 278–281 (GAGD), and Asn305. Asp281 acts as the Proton acceptor in catalysis.

This sequence belongs to the carbohydrate kinase pfkB family. As to expression, expressed in roots, leaf blade shoots, leaf sheath shoots and panicles.

It catalyses the reaction myo-inositol + ATP = 1D-myo-inositol 3-phosphate + ADP + H(+). Functionally, kinase that phosphorylates myo-inositol to produce multiple myo-inositol monophosphates. Participates in phytic acid biosynthesis in developing seeds. Phytic acid is the primary storage form of phosphorus in cereal grains and other plant seeds. This chain is Inositol 3-kinase, found in Oryza sativa subsp. japonica (Rice).